Consider the following 375-residue polypeptide: Carbamoyl phosphate synthase small chain (375 aa).

The CPSase stretch occupies residues 1-185 (MTQPAILVLE…LNANAFVQAE (185 aa)). 3 residues coordinate L-glutamine: Ser47, Gly237, and Gly239. The Glutamine amidotransferase type-1 domain maps to 189 to 375 (KVVAYDYGVK…FVASMAEAKS (187 aa)). Cys265 serves as the catalytic Nucleophile. The L-glutamine site is built by Leu266, Gln269, Asn307, Gly309, and Phe310. Active-site residues include His349 and Glu351.

This sequence belongs to the CarA family. In terms of assembly, composed of two chains; the small (or glutamine) chain promotes the hydrolysis of glutamine to ammonia, which is used by the large (or ammonia) chain to synthesize carbamoyl phosphate. Tetramer of heterodimers (alpha,beta)4.

The enzyme catalyses hydrogencarbonate + L-glutamine + 2 ATP + H2O = carbamoyl phosphate + L-glutamate + 2 ADP + phosphate + 2 H(+). It carries out the reaction L-glutamine + H2O = L-glutamate + NH4(+). It participates in amino-acid biosynthesis; L-arginine biosynthesis; carbamoyl phosphate from bicarbonate: step 1/1. It functions in the pathway pyrimidine metabolism; UMP biosynthesis via de novo pathway; (S)-dihydroorotate from bicarbonate: step 1/3. Its function is as follows. Small subunit of the glutamine-dependent carbamoyl phosphate synthetase (CPSase). CPSase catalyzes the formation of carbamoyl phosphate from the ammonia moiety of glutamine, carbonate, and phosphate donated by ATP, constituting the first step of 2 biosynthetic pathways, one leading to arginine and/or urea and the other to pyrimidine nucleotides. The small subunit (glutamine amidotransferase) binds and cleaves glutamine to supply the large subunit with the substrate ammonia. This Xanthomonas campestris pv. campestris (strain ATCC 33913 / DSM 3586 / NCPPB 528 / LMG 568 / P 25) protein is Carbamoyl phosphate synthase small chain.